A 118-amino-acid chain; its full sequence is T cell receptor gamma variable 4 (118 aa).

A signal peptide spans 1 to 17 (MQWALAVLLAFLSPASQ). Residues 18–118 (KSSNLEGRTK…GVYYCATWDG (101 aa)) enclose the Ig-like domain. Cys41 and Cys113 are disulfide-bonded. Residue Asn106 is glycosylated (N-linked (GlcNAc...) asparagine).

In terms of assembly, gamma-delta TR is a heterodimer composed of a gamma and delta chain; disulfide-linked. The gamma-delta TR is associated with the transmembrane signaling CD3 coreceptor proteins following the stoichiometry: a single gamma-delta TR heterodimer associates with one CD3D-CD3E heterodimer, one CD3G-CD3E heterodimer and one CD247 homodimer forming a stable octameric structure. Upon activation, gamma-delta TR complex associates with FCER1G to initiate intracellular signaling.

It is found in the cell membrane. In terms of biological role, v region of the variable domain of T cell receptor (TR) gamma chain that participates in the antigen recognition. Gamma-delta TRs recognize a variety of self and foreign non-peptide antigens frequently expressed at the epithelial boundaries between the host and external environment, including endogenous lipids presented by MH-like protein CD1D and phosphoantigens presented by butyrophilin-like molecule BTN3A1. Upon antigen recognition induces rapid, innate-like immune responses involved in pathogen clearance and tissue repair. Binding of gamma-delta TR complex to antigen triggers phosphorylation of immunoreceptor tyrosine-based activation motifs (ITAMs) in the CD3 chains by the LCK and FYN kinases, allowing the recruitment, phosphorylation, and activation of ZAP70 that facilitates phosphorylation of the scaffolding proteins LCP2 and LAT. This lead to the formation of a supramolecular signalosome that recruits the phospholipase PLCG1, resulting in calcium mobilization and ERK activation, ultimately leading to T cell expansion and differentiation into effector cells. Gamma-delta TRs are produced through somatic rearrangement of a limited repertoire of variable (V), diversity (D), and joining (J) genes. The potential diversity of gamma-delta TRs is conferred by the unique ability to rearrange (D) genes in tandem and to utilize all three reading frames. The combinatorial diversity is considerably increased by the sequence exonuclease trimming and random nucleotide (N) region additions which occur during the V-(D)-J rearrangements. This chain is T cell receptor gamma variable 4, found in Homo sapiens (Human).